Here is a 78-residue protein sequence, read N- to C-terminus: Acyl carrier protein (78 aa).

The region spanning 2–77 (SDIEQRVKKI…QAIDYVNANL (76 aa)) is the Carrier domain. An O-(pantetheine 4'-phosphoryl)serine modification is found at Ser-37.

The protein belongs to the acyl carrier protein (ACP) family. 4'-phosphopantetheine is transferred from CoA to a specific serine of apo-ACP by AcpS. This modification is essential for activity because fatty acids are bound in thioester linkage to the sulfhydryl of the prosthetic group.

Its subcellular location is the cytoplasm. It participates in lipid metabolism; fatty acid biosynthesis. Functionally, carrier of the growing fatty acid chain in fatty acid biosynthesis. The sequence is that of Acyl carrier protein from Methylobacillus flagellatus (strain ATCC 51484 / DSM 6875 / VKM B-1610 / KT).